The sequence spans 173 residues: Translation initiation factor IF-3 (173 aa).

This sequence belongs to the IF-3 family. Monomer.

It localises to the cytoplasm. In terms of biological role, IF-3 binds to the 30S ribosomal subunit and shifts the equilibrium between 70S ribosomes and their 50S and 30S subunits in favor of the free subunits, thus enhancing the availability of 30S subunits on which protein synthesis initiation begins. The polypeptide is Translation initiation factor IF-3 (Ehrlichia chaffeensis (strain ATCC CRL-10679 / Arkansas)).